Reading from the N-terminus, the 84-residue chain is Small ribosomal subunit protein bS20 (84 aa).

The tract at residues 1 to 28 (MPNIKSAIKRVKTAETRNSRNASQRSAM) is disordered.

The protein belongs to the bacterial ribosomal protein bS20 family.

Functionally, binds directly to 16S ribosomal RNA. The protein is Small ribosomal subunit protein bS20 of Listeria monocytogenes serotype 4b (strain CLIP80459).